The sequence spans 1394 residues: DNA-directed RNA polymerase subunit beta' (1394 aa).

The Zn(2+) site is built by cysteine 71, cysteine 73, cysteine 86, and cysteine 89. 3 residues coordinate Mg(2+): aspartate 462, aspartate 464, and aspartate 466. Residues cysteine 811, cysteine 885, cysteine 892, and cysteine 895 each coordinate Zn(2+).

Belongs to the RNA polymerase beta' chain family. The RNAP catalytic core consists of 2 alpha, 1 beta, 1 beta' and 1 omega subunit. When a sigma factor is associated with the core the holoenzyme is formed, which can initiate transcription. It depends on Mg(2+) as a cofactor. The cofactor is Zn(2+).

The catalysed reaction is RNA(n) + a ribonucleoside 5'-triphosphate = RNA(n+1) + diphosphate. DNA-dependent RNA polymerase catalyzes the transcription of DNA into RNA using the four ribonucleoside triphosphates as substrates. The sequence is that of DNA-directed RNA polymerase subunit beta' from Xanthobacter autotrophicus (strain ATCC BAA-1158 / Py2).